The sequence spans 123 residues: S-adenosylmethionine decarboxylase proenzyme 2 (123 aa).

The active-site Schiff-base intermediate with substrate; via pyruvic acid is the serine 65. Position 65 is a pyruvic acid (Ser); by autocatalysis (serine 65). The active-site Proton acceptor; for processing activity is histidine 70. Cysteine 85 (proton donor; for catalytic activity) is an active-site residue.

It belongs to the prokaryotic AdoMetDC family. Type 1 subfamily. As to quaternary structure, heterotetramer of two alpha and two beta chains arranged as a dimer of alpha/beta heterodimers. Pyruvate serves as cofactor. Is synthesized initially as an inactive proenzyme. Formation of the active enzyme involves a self-maturation process in which the active site pyruvoyl group is generated from an internal serine residue via an autocatalytic post-translational modification. Two non-identical subunits are generated from the proenzyme in this reaction, and the pyruvate is formed at the N-terminus of the alpha chain, which is derived from the carboxyl end of the proenzyme. The post-translation cleavage follows an unusual pathway, termed non-hydrolytic serinolysis, in which the side chain hydroxyl group of the serine supplies its oxygen atom to form the C-terminus of the beta chain, while the remainder of the serine residue undergoes an oxidative deamination to produce ammonia and the pyruvoyl group blocking the N-terminus of the alpha chain.

The catalysed reaction is S-adenosyl-L-methionine + H(+) = S-adenosyl 3-(methylsulfanyl)propylamine + CO2. Its pathway is amine and polyamine biosynthesis; S-adenosylmethioninamine biosynthesis; S-adenosylmethioninamine from S-adenosyl-L-methionine: step 1/1. Its function is as follows. Catalyzes the decarboxylation of S-adenosylmethionine to S-adenosylmethioninamine (dcAdoMet), the propylamine donor required for the synthesis of the polyamines spermine and spermidine from the diamine putrescine. This is S-adenosylmethionine decarboxylase proenzyme 2 from Bacillus cereus (strain ATCC 14579 / DSM 31 / CCUG 7414 / JCM 2152 / NBRC 15305 / NCIMB 9373 / NCTC 2599 / NRRL B-3711).